A 452-amino-acid polypeptide reads, in one-letter code: Maltoporin (452 aa).

An N-terminal signal peptide occupies residues 1-25; the sequence is MMITLRKLPLAVAVAAGVMSAQAMA.

This sequence belongs to the porin LamB (TC 1.B.3) family. Homotrimer formed of three 18-stranded antiparallel beta-barrels, containing three independent channels.

Its subcellular location is the cell outer membrane. The enzyme catalyses beta-maltose(in) = beta-maltose(out). In terms of biological role, involved in the transport of maltose and maltodextrins. In Salmonella choleraesuis (strain SC-B67), this protein is Maltoporin.